The following is a 172-amino-acid chain: Ribosome maturation factor RimM (172 aa).

The 74-residue stretch at Asp95 to Leu168 folds into the PRC barrel domain.

It belongs to the RimM family. In terms of assembly, binds ribosomal protein uS19.

It localises to the cytoplasm. An accessory protein needed during the final step in the assembly of 30S ribosomal subunit, possibly for assembly of the head region. Essential for efficient processing of 16S rRNA. May be needed both before and after RbfA during the maturation of 16S rRNA. It has affinity for free ribosomal 30S subunits but not for 70S ribosomes. This is Ribosome maturation factor RimM from Streptococcus uberis (strain ATCC BAA-854 / 0140J).